Here is a 131-residue protein sequence, read N- to C-terminus: Large-conductance mechanosensitive channel (131 aa).

Helical transmembrane passes span 8–28 (FAVRGNVIDLAVGVIIGGAFG), 30–50 (IVSSLVNDIIMPLVGLILGGI), and 67–87 (GAFLQTVVDFLVIAFSIFLFV).

The protein belongs to the MscL family. Homopentamer.

The protein localises to the cell membrane. Its function is as follows. Channel that opens in response to stretch forces in the membrane lipid bilayer. May participate in the regulation of osmotic pressure changes within the cell. The chain is Large-conductance mechanosensitive channel from Anoxybacillus flavithermus (strain DSM 21510 / WK1).